We begin with the raw amino-acid sequence, 504 residues long: UDP-N-acetylmuramoylalanine--D-glutamate ligase (504 aa).

ATP is bound at residue 129–135 (GTNGKTT).

The protein belongs to the MurCDEF family.

It is found in the cytoplasm. The enzyme catalyses UDP-N-acetyl-alpha-D-muramoyl-L-alanine + D-glutamate + ATP = UDP-N-acetyl-alpha-D-muramoyl-L-alanyl-D-glutamate + ADP + phosphate + H(+). Its pathway is cell wall biogenesis; peptidoglycan biosynthesis. Functionally, cell wall formation. Catalyzes the addition of glutamate to the nucleotide precursor UDP-N-acetylmuramoyl-L-alanine (UMA). This is UDP-N-acetylmuramoylalanine--D-glutamate ligase from Burkholderia mallei (strain NCTC 10247).